Here is a 676-residue protein sequence, read N- to C-terminus: tRNA 5-methylaminomethyl-2-thiouridine biosynthesis bifunctional protein MnmC (676 aa).

The segment at 1-241 is tRNA (mnm(5)s(2)U34)-methyltransferase; sequence MFTVTPAKIY…KRECLCGIKN (241 aa). Positions 268 to 676 are FAD-dependent cmnm(5)s(2)U34 oxidoreductase; sequence IGGGIASLFT…RKLLKGTEIK (409 aa).

It in the N-terminal section; belongs to the methyltransferase superfamily. tRNA (mnm(5)s(2)U34)-methyltransferase family. The protein in the C-terminal section; belongs to the DAO family. It depends on FAD as a cofactor.

It localises to the cytoplasm. It catalyses the reaction 5-aminomethyl-2-thiouridine(34) in tRNA + S-adenosyl-L-methionine = 5-methylaminomethyl-2-thiouridine(34) in tRNA + S-adenosyl-L-homocysteine + H(+). Functionally, catalyzes the last two steps in the biosynthesis of 5-methylaminomethyl-2-thiouridine (mnm(5)s(2)U) at the wobble position (U34) in tRNA. Catalyzes the FAD-dependent demodification of cmnm(5)s(2)U34 to nm(5)s(2)U34, followed by the transfer of a methyl group from S-adenosyl-L-methionine to nm(5)s(2)U34, to form mnm(5)s(2)U34. This is tRNA 5-methylaminomethyl-2-thiouridine biosynthesis bifunctional protein MnmC from Histophilus somni (strain 129Pt) (Haemophilus somnus).